We begin with the raw amino-acid sequence, 507 residues long: tRNA-2-methylthio-N(6)-dimethylallyladenosine synthase (507 aa).

An MTTase N-terminal domain is found at 13–129; it reads RTYQVRTYGC…LPALLERARH (117 aa). [4Fe-4S] cluster-binding residues include cysteine 22, cysteine 58, cysteine 92, cysteine 166, cysteine 170, and cysteine 173. The Radical SAM core domain maps to 152-388; that stretch reads RESAYAAWVS…IALQESVTLE (237 aa). The TRAM domain maps to 391-462; the sequence is QKQIGRMIEV…PHHLIADDGV (72 aa). Residues 459–478 show a composition bias toward basic and acidic residues; it reads DDGVRSHRRTRAGDAHEAGK. The segment at 459–492 is disordered; sequence DDGVRSHRRTRAGDAHEAGKKPSTPGIGLGMPAI.

It belongs to the methylthiotransferase family. MiaB subfamily. In terms of assembly, monomer. The cofactor is [4Fe-4S] cluster.

Its subcellular location is the cytoplasm. It carries out the reaction N(6)-dimethylallyladenosine(37) in tRNA + (sulfur carrier)-SH + AH2 + 2 S-adenosyl-L-methionine = 2-methylsulfanyl-N(6)-dimethylallyladenosine(37) in tRNA + (sulfur carrier)-H + 5'-deoxyadenosine + L-methionine + A + S-adenosyl-L-homocysteine + 2 H(+). Its function is as follows. Catalyzes the methylthiolation of N6-(dimethylallyl)adenosine (i(6)A), leading to the formation of 2-methylthio-N6-(dimethylallyl)adenosine (ms(2)i(6)A) at position 37 in tRNAs that read codons beginning with uridine. The polypeptide is tRNA-2-methylthio-N(6)-dimethylallyladenosine synthase (Mycobacteroides abscessus (strain ATCC 19977 / DSM 44196 / CCUG 20993 / CIP 104536 / JCM 13569 / NCTC 13031 / TMC 1543 / L948) (Mycobacterium abscessus)).